Here is a 270-residue protein sequence, read N- to C-terminus: Small ribosomal subunit protein eS1 (270 aa).

Disordered stretches follow at residues 1–21 (MAVGKNKGTSKGGKKGSKKKV) and 238–270 (GGGKGAEVSTGAAEGGVTIDRPEGYEPPVQESV).

It belongs to the eukaryotic ribosomal protein eS1 family. As to quaternary structure, component of the small ribosomal subunit. Mature ribosomes consist of a small (40S) and a large (60S) subunit. The 40S subunit contains about 33 different proteins and 1 molecule of RNA (18S). The 60S subunit contains about 49 different proteins and 3 molecules of RNA (28S, 5.8S and 5S).

The protein resides in the cytoplasm. This Aedes aegypti (Yellowfever mosquito) protein is Small ribosomal subunit protein eS1.